We begin with the raw amino-acid sequence, 301 residues long: Porphobilinogen deaminase (301 aa).

Cys-242 bears the S-(dipyrrolylmethanemethyl)cysteine mark.

This sequence belongs to the HMBS family. In terms of assembly, monomer. The cofactor is dipyrromethane.

It catalyses the reaction 4 porphobilinogen + H2O = hydroxymethylbilane + 4 NH4(+). The protein operates within porphyrin-containing compound metabolism; protoporphyrin-IX biosynthesis; coproporphyrinogen-III from 5-aminolevulinate: step 2/4. Tetrapolymerization of the monopyrrole PBG into the hydroxymethylbilane pre-uroporphyrinogen in several discrete steps. The polypeptide is Porphobilinogen deaminase (Rickettsia canadensis (strain McKiel)).